Here is a 423-residue protein sequence, read N- to C-terminus: MTDDTEYRCSFCGKEHHQVDDLIAGPDVRICSECVVLSCEIVEDRRNEALAKQDAFIKRKQRSVLEGLPKPAEIYAFLDEYVIGQQKAKRDLSVAVYNHYKRLVSTKSESENEVELSKSNILLIGPTGCGKTYLAQTLARMLRVPFAVADATALTEAGYVGDDVENVLLKLLQDADFDITRAEAGIVCIDEIDKISRKADSPSITRDVSGEGVQQALLKILEGTAASVPLQGGKKHTQYEQASINTRNILFIVAGAFSGIEEIISSRIGRSNMGFGSDLLRKDTDVFDQILPEDLRKFGLIPEFIGRLPIVTAISHLDGEDMIRVLTEPKNALVKQYKRLFSLDGVSLGFDHEALEAIVELALKRKTGARALRSVMESILSPIMFDVPSRGDIESVRITAETVAGGGPHLTMRCARSNYIRSA.

In terms of domain architecture, ClpX-type ZB spans 1–50 (MTDDTEYRCSFCGKEHHQVDDLIAGPDVRICSECVVLSCEIVEDRRNEAL). Zn(2+) is bound by residues C9, C12, C31, and C34. An ATP-binding site is contributed by 126–133 (PTGCGKTY).

It belongs to the ClpX chaperone family. In terms of assembly, component of the ClpX-ClpP complex. Forms a hexameric ring that, in the presence of ATP, binds to fourteen ClpP subunits assembled into a disk-like structure with a central cavity, resembling the structure of eukaryotic proteasomes.

Its function is as follows. ATP-dependent specificity component of the Clp protease. It directs the protease to specific substrates. Can perform chaperone functions in the absence of ClpP. The polypeptide is ATP-dependent Clp protease ATP-binding subunit ClpX (Tropheryma whipplei (strain TW08/27) (Whipple's bacillus)).